A 136-amino-acid polypeptide reads, in one-letter code: Large ribosomal subunit protein eL27 (136 aa).

The 36-residue stretch at 5–40 (MKPGKVVMVLAGRYAGRKAVIVKNIDDGTADRPYSH) folds into the KOW domain.

The protein belongs to the eukaryotic ribosomal protein eL27 family. Component of the large ribosomal subunit.

It is found in the cytoplasm. The protein resides in the cytosol. Its subcellular location is the rough endoplasmic reticulum. Component of the large ribosomal subunit. In Ictalurus punctatus (Channel catfish), this protein is Large ribosomal subunit protein eL27 (rpl27).